The primary structure comprises 501 residues: MXIAVVGAGVTGLAAAARLAAKGHQVTIFEKNEQVGGRMSQFKKDGFTFDMGPTIVMVPDVYKAVFEESGKRFEDYVDMKPLTHIFDIYFSDKDKVSVSTDLAQLSQTLEATEPGSTQGFMQFLTDVYKRYEVARKYFLERTFRKPSEFYNPLTLYRGLKLKTFNNANQLIDNYVSNEKIRKLLAFQTLYIGIDPKQGPSIYSIIPMIEMVHGVHYIKGGMYGLAQGLLQLGQDHGVKVELNADVQEIIIDPKFKRADGLRVNGDIRRFDKVLCTADFPYVAQNLMPVHSPLKNYSPEKVDNMDYSCSAFLIYAGINRQLRDKLHVHNVVFARDFRGNIDDIFSGKMPDDPSLYLYFPSVEDEALAPKDQTGMYVLMPVPELKTGEIDWNDPNMVEKAKDVIYNKLETIEALKDIRQDVVSETVFTPLDFESRYNAKFGSAFGLMPTLTQSNYYRPPNVSRDYKDLYFAGASTHPGAGVPIVLTSAKITAEAMLEDIEHGK.

Residue 5–17 (VVGAGVTGLAAAA) coordinates FAD.

It belongs to the carotenoid/retinoid oxidoreductase family. CrtN subfamily.

It catalyses the reaction 15-cis-4,4'-diapophytoene + 3 FAD + 3 H(+) = all-trans-4,4'-diaponeurosporene + 3 FADH2. Its pathway is carotenoid biosynthesis; staphyloxanthin biosynthesis; staphyloxanthin from farnesyl diphosphate: step 2/5. Functionally, involved in the biosynthesis of the yellow-orange carotenoid staphyloxanthin, which plays a role in the virulence via its protective function against oxidative stress. Catalyzes three successive dehydrogenation reactions that lead to the introduction of three double bonds into 4,4'-diapophytoene (dehydrosqualene), with 4,4'-diapophytofluene and 4,4'-diapo-zeta-carotene as intermediates, and 4,4'-diaponeurosporene (the major deep-yellow pigment in staphylococci strains) as the end product. The chain is 4,4'-diapophytoene desaturase (4,4'-diaponeurosporene-forming) from Staphylococcus haemolyticus (strain JCSC1435).